A 239-amino-acid polypeptide reads, in one-letter code: tRNA1(Val) (adenine(37)-N6)-methyltransferase (239 aa).

It belongs to the methyltransferase superfamily. tRNA (adenine-N(6)-)-methyltransferase family.

The protein resides in the cytoplasm. It catalyses the reaction adenosine(37) in tRNA1(Val) + S-adenosyl-L-methionine = N(6)-methyladenosine(37) in tRNA1(Val) + S-adenosyl-L-homocysteine + H(+). Functionally, specifically methylates the adenine in position 37 of tRNA(1)(Val) (anticodon cmo5UAC). The sequence is that of tRNA1(Val) (adenine(37)-N6)-methyltransferase from Vibrio campbellii (strain ATCC BAA-1116).